Consider the following 107-residue polypeptide: Keratin, type I cytoskeletal 20 (107 aa).

The segment at 1-7 (GNLWVGN) is head. The interval 8–43 (EKMTMKNLNDRLASYLEKVRSLEQSNSKFELQIKQW) is coil 1A. In terms of domain architecture, IF rod spans 8 to 107 (EKMTMKNLND…ETERGIRLAV (100 aa)). A linker 1 region spans residues 44–61 (YESNTPGISRDHSAYLQQ). Residues 62–107 (IQDLRNQIRDAQLQNARCVLQIDNAKLAAEDFRLKYETERGIRLAV) form a coil 1B region.

Belongs to the intermediate filament family. As to quaternary structure, heterotetramer of two type I and two type II keratins. Associates with KRT8.

Its function is as follows. Plays a significant role in maintaining keratin filament organization in intestinal epithelia. When phosphorylated, plays a role in the secretion of mucin in the small intestine. This chain is Keratin, type I cytoskeletal 20, found in Sus scrofa (Pig).